Reading from the N-terminus, the 455-residue chain is 5'-nucleotidase domain-containing protein 1 (455 aa).

Residue D16 is the Nucleophile of the active site. Positions 16 and 18 each coordinate Mg(2+). The active-site Proton donor is D18. K171 carries the post-translational modification N6-acetyllysine. D313 is a binding site for Mg(2+). Basic and acidic residues predominate over residues G339–K364. The segment at G339 to L368 is disordered.

This sequence belongs to the 5'(3')-deoxyribonucleotidase family.

This is 5'-nucleotidase domain-containing protein 1 (NT5DC1) from Homo sapiens (Human).